The sequence spans 360 residues: UDP-N-acetylglucosamine--N-acetylmuramyl-(pentapeptide) pyrophosphoryl-undecaprenol N-acetylglucosamine transferase (360 aa).

Residues 15 to 17, N127, R163, S191, I249, 268 to 273, and Q293 each bind UDP-N-acetyl-alpha-D-glucosamine; these read TGG and ALTVSE.

It belongs to the glycosyltransferase 28 family. MurG subfamily.

It localises to the cell inner membrane. The enzyme catalyses di-trans,octa-cis-undecaprenyl diphospho-N-acetyl-alpha-D-muramoyl-L-alanyl-D-glutamyl-meso-2,6-diaminopimeloyl-D-alanyl-D-alanine + UDP-N-acetyl-alpha-D-glucosamine = di-trans,octa-cis-undecaprenyl diphospho-[N-acetyl-alpha-D-glucosaminyl-(1-&gt;4)]-N-acetyl-alpha-D-muramoyl-L-alanyl-D-glutamyl-meso-2,6-diaminopimeloyl-D-alanyl-D-alanine + UDP + H(+). It participates in cell wall biogenesis; peptidoglycan biosynthesis. Its function is as follows. Cell wall formation. Catalyzes the transfer of a GlcNAc subunit on undecaprenyl-pyrophosphoryl-MurNAc-pentapeptide (lipid intermediate I) to form undecaprenyl-pyrophosphoryl-MurNAc-(pentapeptide)GlcNAc (lipid intermediate II). The protein is UDP-N-acetylglucosamine--N-acetylmuramyl-(pentapeptide) pyrophosphoryl-undecaprenol N-acetylglucosamine transferase of Proteus mirabilis (strain HI4320).